The sequence spans 455 residues: Anaerobic glycerol-3-phosphate dehydrogenase subunit B (455 aa).

It belongs to the anaerobic G-3-P dehydrogenase subunit B family. Composed of a catalytic GlpA/B dimer and of membrane bound GlpC. FMN is required as a cofactor.

It carries out the reaction a quinone + sn-glycerol 3-phosphate = dihydroxyacetone phosphate + a quinol. Its pathway is polyol metabolism; glycerol degradation via glycerol kinase pathway; glycerone phosphate from sn-glycerol 3-phosphate (anaerobic route): step 1/1. Its function is as follows. Conversion of glycerol 3-phosphate to dihydroxyacetone. Uses fumarate or nitrate as electron acceptor. This Aliivibrio fischeri (strain MJ11) (Vibrio fischeri) protein is Anaerobic glycerol-3-phosphate dehydrogenase subunit B.